The chain runs to 417 residues: UDP-N-acetylglucosamine 1-carboxyvinyltransferase (417 aa).

Residue 22–23 (KN) participates in phosphoenolpyruvate binding. Position 91 (R91) interacts with UDP-N-acetyl-alpha-D-glucosamine. The active-site Proton donor is C115. 2-(S-cysteinyl)pyruvic acid O-phosphothioketal is present on C115. UDP-N-acetyl-alpha-D-glucosamine contacts are provided by residues 120-124 (RPVDQ), D304, and I326.

It belongs to the EPSP synthase family. MurA subfamily.

It is found in the cytoplasm. The catalysed reaction is phosphoenolpyruvate + UDP-N-acetyl-alpha-D-glucosamine = UDP-N-acetyl-3-O-(1-carboxyvinyl)-alpha-D-glucosamine + phosphate. The protein operates within cell wall biogenesis; peptidoglycan biosynthesis. Functionally, cell wall formation. Adds enolpyruvyl to UDP-N-acetylglucosamine. This chain is UDP-N-acetylglucosamine 1-carboxyvinyltransferase, found in Desulfovibrio desulfuricans (strain ATCC 27774 / DSM 6949 / MB).